We begin with the raw amino-acid sequence, 64 residues long: Chromatin protein Cren7 (64 aa).

Belongs to the Cren7 family. In terms of assembly, monomer. In terms of processing, methylated at multiple sites, to varying extents.

The protein resides in the chromosome. Its subcellular location is the cytoplasm. Functionally, a chromatin protein, binds double-stranded DNA without sequence specificity. Constrains negative DNA supercoils. This Aeropyrum pernix (strain ATCC 700893 / DSM 11879 / JCM 9820 / NBRC 100138 / K1) protein is Chromatin protein Cren7.